Consider the following 100-residue polypeptide: Osteocalcin (100 aa).

Positions 1-23 (MRALTLLALLALATLCITGQAGA) are cleaved as a signal peptide. Residues 24–51 (KPSGAESSKGAAFVSKQEGSEVVKRPRR) constitute a propeptide that is removed on maturation. The 47-residue stretch at 52–98 (YLYQWLGAPAPYPDPLEPKREVCELNPDCDELADHIGFQEAYRRFYG) folds into the Gla domain. Pro-60 carries the 4-hydroxyproline modification. Residues Glu-68, Glu-72, Glu-75, and Asp-81 each contribute to the Ca(2+) site. Glu-68, Glu-72, and Glu-75 each carry 4-carboxyglutamate. An intrachain disulfide couples Cys-74 to Cys-80.

The protein belongs to the osteocalcin/matrix Gla protein family. In terms of processing, gamma-carboxyglutamate residues are formed by vitamin K dependent carboxylation by GGCX. These residues are essential for the binding of calcium. Decarboxylation promotes the hormone activity.

Its subcellular location is the secreted. Its function is as follows. The carboxylated form is one of the main organic components of the bone matrix, which constitutes 1-2% of the total bone protein: it acts as a negative regulator of bone formation and is required to limit bone formation without impairing bone resorption or mineralization. The carboxylated form binds strongly to apatite and calcium. In terms of biological role, the uncarboxylated form acts as a hormone secreted by osteoblasts, which regulates different cellular processes, such as energy metabolism, male fertility and brain development. Regulates of energy metabolism by acting as a hormone favoring pancreatic beta-cell proliferation, insulin secretion and sensitivity and energy expenditure. Uncarboxylated osteocalcin hormone also promotes testosterone production in the testes: acts as a ligand for G protein-coupled receptor GPRC6A at the surface of Leydig cells, initiating a signaling response that promotes the expression of enzymes required for testosterone synthesis in a CREB-dependent manner. Also acts as a regulator of brain development: osteocalcin hormone crosses the blood-brain barrier and acts as a ligand for GPR158 on neurons, initiating a signaling response that prevents neuronal apoptosis in the hippocampus, favors the synthesis of all monoamine neurotransmitters and inhibits that of gamma-aminobutyric acid (GABA). Osteocalcin also crosses the placenta during pregnancy and maternal osteocalcin is required for fetal brain development. This is Osteocalcin (BGLAP) from Macaca mulatta (Rhesus macaque).